Here is a 98-residue protein sequence, read N- to C-terminus: NADH-ubiquinone oxidoreductase chain 4L (98 aa).

A run of 3 helical transmembrane segments spans residues 1-21 (MPPI…GMLV), 29-49 (SLLC…TMAL), and 61-81 (IVLL…LVMV).

It belongs to the complex I subunit 4L family. Core subunit of respiratory chain NADH dehydrogenase (Complex I) which is composed of 45 different subunits.

It localises to the mitochondrion inner membrane. The enzyme catalyses a ubiquinone + NADH + 5 H(+)(in) = a ubiquinol + NAD(+) + 4 H(+)(out). Core subunit of the mitochondrial membrane respiratory chain NADH dehydrogenase (Complex I) which catalyzes electron transfer from NADH through the respiratory chain, using ubiquinone as an electron acceptor. Part of the enzyme membrane arm which is embedded in the lipid bilayer and involved in proton translocation. This Orycteropus afer (Aardvark) protein is NADH-ubiquinone oxidoreductase chain 4L (MT-ND4L).